Reading from the N-terminus, the 227-residue chain is Ribonuclease 3 (227 aa).

One can recognise an RNase III domain in the interval 6-128; it reads ASDYQQRIGY…VIAAIYLDAD (123 aa). Residue Glu-41 participates in Mg(2+) binding. The active site involves Asp-45. Residues Asp-114 and Glu-117 each contribute to the Mg(2+) site. Residue Glu-117 is part of the active site. The DRBM domain maps to 155–225; it reads DPKTRLQEWL…ASHAIDQLDS (71 aa). Positions 203–212 are enriched in basic and acidic residues; sequence GEGSSRRLAE. The tract at residues 203-227 is disordered; sequence GEGSSRRLAEQDAASHAIDQLDSNK.

It belongs to the ribonuclease III family. As to quaternary structure, homodimer. Mg(2+) is required as a cofactor.

It localises to the cytoplasm. The enzyme catalyses Endonucleolytic cleavage to 5'-phosphomonoester.. In terms of biological role, digests double-stranded RNA. Involved in the processing of primary rRNA transcript to yield the immediate precursors to the large and small rRNAs (23S and 16S). Processes some mRNAs, and tRNAs when they are encoded in the rRNA operon. Processes pre-crRNA and tracrRNA of type II CRISPR loci if present in the organism. This is Ribonuclease 3 from Xylella fastidiosa (strain 9a5c).